A 64-amino-acid chain; its full sequence is Large ribosomal subunit protein bL35 (64 aa).

The protein belongs to the bacterial ribosomal protein bL35 family.

This is Large ribosomal subunit protein bL35 from Pseudomonas putida (strain W619).